The following is a 561-amino-acid chain: Asparagine synthetase [glutamine-hydrolyzing] (561 aa).

The For GATase activity role is filled by Cys2. The region spanning Cys2–Lys191 is the Glutamine amidotransferase type-2 domain. Residues Arg49–Val53, Asn75–Glu77, and Asp97 each bind L-glutamine. The Asparagine synthetase domain occupies His213 to Tyr536. ATP contacts are provided by residues Leu256, Ile288, and Ser363–Gly364. Residue Lys385 is modified to N6-acetyllysine. Thr545 carries the phosphothreonine modification. A Phosphoserine modification is found at Ser557.

The enzyme catalyses L-aspartate + L-glutamine + ATP + H2O = L-asparagine + L-glutamate + AMP + diphosphate + H(+). It participates in amino-acid biosynthesis; L-asparagine biosynthesis; L-asparagine from L-aspartate (L-Gln route): step 1/1. In Cricetulus griseus (Chinese hamster), this protein is Asparagine synthetase [glutamine-hydrolyzing] (ASNS).